A 250-amino-acid chain; its full sequence is MGQKVHPIGIRLGVVKRHNANWYANPKQYAEYLLKDLQVREFLTKKLKNAMVSNILIERPSGAAKVTISTARPGIVIGKKGEDIEKLQRELTNIMGVPAQVSINEIDRPDLDARLVAEAIASQLEKRVMFRRAMKRAVQNTMRAGAKGIKVEVSGRLGGAEIARTEWYREGRVPLHTLRADIDYATMRAETTYGTIGVKVWIFRGEILGGMKQVMNPAPAEERPAKRGRGRGEGQERRGRRGDRAADKGE.

Residues 39–107 (VREFLTKKLK…PAQVSINEID (69 aa)) enclose the KH type-2 domain. The segment at 215-250 (MNPAPAEERPAKRGRGRGEGQERRGRRGDRAADKGE) is disordered. Over residues 220–250 (AEERPAKRGRGRGEGQERRGRRGDRAADKGE) the composition is skewed to basic and acidic residues.

Belongs to the universal ribosomal protein uS3 family. Part of the 30S ribosomal subunit. Forms a tight complex with proteins S10 and S14.

Its function is as follows. Binds the lower part of the 30S subunit head. Binds mRNA in the 70S ribosome, positioning it for translation. The sequence is that of Small ribosomal subunit protein uS3 from Acinetobacter baumannii (strain AB307-0294).